A 337-amino-acid chain; its full sequence is Basic membrane protein A2 (337 aa).

A signal peptide spans 1-17; sequence MNKLLLLILFECIIFLS. C18 is lipidated: N-palmitoyl cysteine. C18 carries S-diacylglycerol cysteine lipidation.

It belongs to the BMP lipoprotein family. In terms of assembly, monomer.

Its subcellular location is the cell inner membrane. Functionally, immunogenic protein. May be part of an ABC-type nucleoside uptake system involved in the purine salvage pathway. The sequence is that of Basic membrane protein A2 (bmpA2) from Borrelia garinii subsp. bavariensis (strain ATCC BAA-2496 / DSM 23469 / PBi) (Borreliella bavariensis).